A 513-amino-acid polypeptide reads, in one-letter code: MGPTKYIIIAVVIIIICVILGLYVVDKKAKEKLSEASKEARRLKEEAERDAEAKKKEAILEAKEEAHKLRAEVERENRERRNEVQRLERRIIQKEEALDKKSEALENKEEALNKKQQKIEDVEAHMEELHEKQRTELERISGLTTEQAKEFLLEQVRKEVKHETAVMIKEIETKAKEEADKRAREVITYAIQRCAADHVAETTVHVVNLPNDEMKGRIIGREGRNIRTLETLTGVDLIIDDTPEAVILSGFDPIRREVARIALEKLIVDGRIHPARIEEMVEKAKKEVEVSIKEEGEQATFETGIHGLHIELIRLLGRLKYRTSYGQNVLKHSIEVSHLAGLMASELGIDPTLAKRVGLLHDIGKAVDHEVEGPHAIIGSEIAKKYRESALVVNAIGAHHGDMEPQSLEAILVQAADAISAARPGARRETLEAYIKRLEKLEEIANECEGVEKSYAIQAGREIRIMVKPEVLDDTGCIEMARNIVKQIESELEYPGQIKVNVIRETRAIEYAK.

The helical transmembrane segment at 6–26 (YIIIAVVIIIICVILGLYVVD) threads the bilayer. The KH domain occupies 203-288 (TVHVVNLPND…EMVEKAKKEV (86 aa)). The 94-residue stretch at 329 to 422 (VLKHSIEVSH…VQAADAISAA (94 aa)) folds into the HD domain.

It belongs to the RNase Y family.

Its subcellular location is the cell membrane. Functionally, endoribonuclease that initiates mRNA decay. This is Ribonuclease Y from Clostridium botulinum (strain Langeland / NCTC 10281 / Type F).